We begin with the raw amino-acid sequence, 48 residues long: Histone H4 (48 aa).

The span at 1 to 14 (MGGKGGKGGKGLGK) shows a compositional bias: gly residues. The segment at 1–23 (MGGKGGKGGKGLGKVGAKKRHSR) is disordered.

It belongs to the histone H4 family. The nucleosome is a histone octamer containing two molecules each of H2A, H2B, H3 and H4 assembled in one H3-H4 heterotetramer and two H2A-H2B heterodimers. The octamer wraps approximately 147 bp of DNA.

The protein resides in the nucleus. Its subcellular location is the chromosome. In terms of biological role, core component of nucleosome. Nucleosomes wrap and compact DNA into chromatin, limiting DNA accessibility to the cellular machineries which require DNA as a template. Histones thereby play a central role in transcription regulation, DNA repair, DNA replication and chromosomal stability. DNA accessibility is regulated via a complex set of post-translational modifications of histones, also called histone code, and nucleosome remodeling. The protein is Histone H4 of Blepharisma japonicum.